A 463-amino-acid polypeptide reads, in one-letter code: Annexin A7 (463 aa).

2 stretches are compositionally biased toward pro residues: residues 1–18 (MSYP…PGYP) and 26–38 (FPPP…PSGF). Disordered stretches follow at residues 1 to 54 (MSYP…SSGY) and 71 to 153 (GYPG…THGT). Positions 1 to 140 (MSYPGYPPTG…QYPGGQSPYP (140 aa)) are repeat-rich region. The segment at 5 to 20 (GYPPTGYPPFPGYPPT) is 3 X 5 AA tandem repeats of G-Y-P-P-X. Residues 86-99 (GGQGFGAPPGGAGF) are compositionally biased toward gly residues. Annexin repeat units lie at residues 160-231 (FDAM…ALFM), 232-303 (PSTY…SMCQ), 315-387 (QLAQ…TILQ), and 391-462 (NRPA…AIVG). The residue at position 208 (K208) is an N6-acetyllysine.

This sequence belongs to the annexin family. As to quaternary structure, interacts with PDCD6.

In terms of biological role, calcium/phospholipid-binding protein which promotes membrane fusion and is involved in exocytosis. The protein is Annexin A7 (ANXA7) of Bos taurus (Bovine).